We begin with the raw amino-acid sequence, 223 residues long: Urease accessory protein UreF (223 aa).

The protein belongs to the UreF family. UreD, UreF and UreG form a complex that acts as a GTP-hydrolysis-dependent molecular chaperone, activating the urease apoprotein by helping to assemble the nickel containing metallocenter of UreC. The UreE protein probably delivers the nickel.

The protein resides in the cytoplasm. Its function is as follows. Required for maturation of urease via the functional incorporation of the urease nickel metallocenter. This Rhizobium meliloti (strain 1021) (Ensifer meliloti) protein is Urease accessory protein UreF.